The sequence spans 467 residues: Gamma-aminobutyric acid receptor subunit gamma-3 (467 aa).

An N-terminal signal peptide occupies residues 1–17 (MAAKLLLLLCLFSGLHA). At 18–256 (RSRRVEEDEN…FELSRRMGYF (239 aa)) the chain is on the extracellular side. A glycan (N-linked (GlcNAc...) asparagine) is linked at Asn110. An intrachain disulfide couples Cys171 to Cys185. Asn228 carries an N-linked (GlcNAc...) asparagine glycan. A helical transmembrane segment spans residues 257–277 (TIQTYIPCILTVVLSWVSFWI). Residues 278-283 (KKDATP) lie on the Cytoplasmic side of the membrane. The helical transmembrane segment at 284–303 (ARTTLGITTVLTMTTLSTIA) threads the bilayer. Topologically, residues 304 to 311 (RKSLPRVS) are extracellular. A helical membrane pass occupies residues 312–332 (YVTAMDLFVTVCFLFVFAALM). The Cytoplasmic segment spans residues 333-446 (EYATLNYYSS…DVSELDSYSR (114 aa)). Residues 447 to 467 (VFFPTSFLLFNLVYWVGYLYL) traverse the membrane as a helical segment.

Belongs to the ligand-gated ion channel (TC 1.A.9) family. Gamma-aminobutyric acid receptor (TC 1.A.9.5) subfamily. GABRG3 sub-subfamily. In terms of assembly, heteropentamer, formed by a combination of alpha (GABRA1-6), beta (GABRB1-3), gamma (GABRG1-3), delta (GABRD), epsilon (GABRE), rho (GABRR1-3), pi (GABRP) and theta (GABRQ) chains, each subunit exhibiting distinct physiological and pharmacological properties. In terms of processing, may be palmitoylated. Expressed in brain.

Its subcellular location is the postsynaptic cell membrane. It is found in the cell membrane. It carries out the reaction chloride(in) = chloride(out). In terms of biological role, gamma subunit of the heteropentameric ligand-gated chloride channel gated by gamma-aminobutyric acid (GABA), a major inhibitory neurotransmitter in the brain. GABA-gated chloride channels, also named GABA(A) receptors (GABAAR), consist of five subunits arranged around a central pore and contain GABA active binding site(s) located at the alpha and beta subunit interface(s). When activated by GABA, GABAARs selectively allow the flow of chloride across the cell membrane down their electrochemical gradient. The polypeptide is Gamma-aminobutyric acid receptor subunit gamma-3 (Mus musculus (Mouse)).